A 574-amino-acid chain; its full sequence is Phenylalanine--tRNA ligase beta subunit (574 aa).

The B5 domain maps to 278–353; it reads LTPKEFEVEL…IAYGYNEIEP (76 aa). Mg(2+) is bound by residues aspartate 331, aspartate 337, glutamate 340, and aspartate 341.

It belongs to the phenylalanyl-tRNA synthetase beta subunit family. Type 2 subfamily. Tetramer of two alpha and two beta subunits. It depends on Mg(2+) as a cofactor.

The protein resides in the cytoplasm. It catalyses the reaction tRNA(Phe) + L-phenylalanine + ATP = L-phenylalanyl-tRNA(Phe) + AMP + diphosphate + H(+). This is Phenylalanine--tRNA ligase beta subunit from Thermococcus kodakarensis (strain ATCC BAA-918 / JCM 12380 / KOD1) (Pyrococcus kodakaraensis (strain KOD1)).